We begin with the raw amino-acid sequence, 347 residues long: NADH-ubiquinone oxidoreductase chain 2 (347 aa).

9 consecutive transmembrane segments (helical) span residues 1–21, 59–79, 93–115, 149–169, 178–198, 201–221, 239–259, 274–294, and 325–345; these read MNPF…MIVM, YFMT…INLL, TASM…HFWV, INPN…GWGG, IMAY…IYNP, TILN…MFAL, IITT…PLTG, DSII…YFYM, and LLPT…MLVV.

This sequence belongs to the complex I subunit 2 family. Core subunit of respiratory chain NADH dehydrogenase (Complex I) which is composed of 45 different subunits. Interacts with TMEM242.

It localises to the mitochondrion inner membrane. It carries out the reaction a ubiquinone + NADH + 5 H(+)(in) = a ubiquinol + NAD(+) + 4 H(+)(out). Its function is as follows. Core subunit of the mitochondrial membrane respiratory chain NADH dehydrogenase (Complex I) which catalyzes electron transfer from NADH through the respiratory chain, using ubiquinone as an electron acceptor. Essential for the catalytic activity and assembly of complex I. The chain is NADH-ubiquinone oxidoreductase chain 2 from Hippopotamus amphibius (Hippopotamus).